The chain runs to 310 residues: Tagatose-6-phosphate kinase (310 aa).

It belongs to the carbohydrate kinase PfkB family. LacC subfamily.

The enzyme catalyses D-tagatofuranose 6-phosphate + ATP = D-tagatofuranose 1,6-bisphosphate + ADP + H(+). The protein operates within carbohydrate metabolism; D-tagatose 6-phosphate degradation; D-glyceraldehyde 3-phosphate and glycerone phosphate from D-tagatose 6-phosphate: step 1/2. The sequence is that of Tagatose-6-phosphate kinase from Staphylococcus aureus (strain bovine RF122 / ET3-1).